Here is a 162-residue protein sequence, read N- to C-terminus: 2-C-methyl-D-erythritol 2,4-cyclodiphosphate synthase (162 aa).

Positions 12 and 14 each coordinate a divalent metal cation. 4-CDP-2-C-methyl-D-erythritol 2-phosphate is bound by residues 12–14 (DVH) and 38–39 (HS). Residue His-46 participates in a divalent metal cation binding. 4-CDP-2-C-methyl-D-erythritol 2-phosphate-binding positions include 60–62 (DIG), 65–69 (FPDTD), Phe-143, and Arg-146.

It belongs to the IspF family. In terms of assembly, homotrimer. The cofactor is a divalent metal cation.

The enzyme catalyses 4-CDP-2-C-methyl-D-erythritol 2-phosphate = 2-C-methyl-D-erythritol 2,4-cyclic diphosphate + CMP. The protein operates within isoprenoid biosynthesis; isopentenyl diphosphate biosynthesis via DXP pathway; isopentenyl diphosphate from 1-deoxy-D-xylulose 5-phosphate: step 4/6. Functionally, involved in the biosynthesis of isopentenyl diphosphate (IPP) and dimethylallyl diphosphate (DMAPP), two major building blocks of isoprenoid compounds. Catalyzes the conversion of 4-diphosphocytidyl-2-C-methyl-D-erythritol 2-phosphate (CDP-ME2P) to 2-C-methyl-D-erythritol 2,4-cyclodiphosphate (ME-CPP) with a corresponding release of cytidine 5-monophosphate (CMP). The chain is 2-C-methyl-D-erythritol 2,4-cyclodiphosphate synthase from Azoarcus sp. (strain BH72).